Reading from the N-terminus, the 235-residue chain is Segregation and condensation protein A (235 aa).

The protein belongs to the ScpA family. As to quaternary structure, component of a cohesin-like complex composed of ScpA, ScpB and the Smc homodimer, in which ScpA and ScpB bind to the head domain of Smc. The presence of the three proteins is required for the association of the complex with DNA.

The protein resides in the cytoplasm. Its function is as follows. Participates in chromosomal partition during cell division. May act via the formation of a condensin-like complex containing Smc and ScpB that pull DNA away from mid-cell into both cell halves. This is Segregation and condensation protein A from Streptococcus mutans serotype c (strain ATCC 700610 / UA159).